A 383-amino-acid chain; its full sequence is Lipoyl synthase, mitochondrial (383 aa).

The segment covering 25-34 (STPSLLQTLD) has biased composition (polar residues). The interval 25-44 (STPSLLQTLDPSVPSPPAAG) is disordered. Residues Cys-110, Cys-115, Cys-121, Cys-141, Cys-145, Cys-148, and Ser-357 each coordinate [4Fe-4S] cluster. Residues 126-346 (ETGTATATIM…RALGVEMGFR (221 aa)) form the Radical SAM core domain.

This sequence belongs to the radical SAM superfamily. Lipoyl synthase family. The cofactor is [4Fe-4S] cluster.

The protein resides in the mitochondrion. It catalyses the reaction [[Fe-S] cluster scaffold protein carrying a second [4Fe-4S](2+) cluster] + N(6)-octanoyl-L-lysyl-[protein] + 2 oxidized [2Fe-2S]-[ferredoxin] + 2 S-adenosyl-L-methionine + 4 H(+) = [[Fe-S] cluster scaffold protein] + N(6)-[(R)-dihydrolipoyl]-L-lysyl-[protein] + 4 Fe(3+) + 2 hydrogen sulfide + 2 5'-deoxyadenosine + 2 L-methionine + 2 reduced [2Fe-2S]-[ferredoxin]. The protein operates within protein modification; protein lipoylation via endogenous pathway; protein N(6)-(lipoyl)lysine from octanoyl-[acyl-carrier-protein]: step 2/2. In terms of biological role, catalyzes the radical-mediated insertion of two sulfur atoms into the C-6 and C-8 positions of the octanoyl moiety bound to the lipoyl domains of lipoate-dependent enzymes, thereby converting the octanoylated domains into lipoylated derivatives. The protein is Lipoyl synthase, mitochondrial of Zea mays (Maize).